Reading from the N-terminus, the 62-residue chain is uncharacterized protein (62 aa).

It is found in the mitochondrion. This is an uncharacterized protein from Marchantia polymorpha (Common liverwort).